Here is a 579-residue protein sequence, read N- to C-terminus: Thiol:disulfide interchange protein DsbD (579 aa).

Positions Met-1–Ala-16 are cleaved as a signal peptide. 2 disulfides stabilise this stretch: Cys-124–Cys-129 and Cys-193–Cys-315. 8 helical membrane passes run Ile-178 to Leu-198, Leu-230 to Leu-250, Tyr-254 to Phe-274, Gly-296 to Thr-316, Ala-337 to Phe-357, Phe-376 to Trp-396, Glu-397 to Ser-417, and Gly-420 to Leu-440. The Thioredoxin domain maps to Thr-449–His-579. A disulfide bridge links Cys-495 with Cys-498.

Belongs to the thioredoxin family. DsbD subfamily.

It is found in the cell inner membrane. The catalysed reaction is [protein]-dithiol + NAD(+) = [protein]-disulfide + NADH + H(+). It carries out the reaction [protein]-dithiol + NADP(+) = [protein]-disulfide + NADPH + H(+). Functionally, required to facilitate the formation of correct disulfide bonds in some periplasmic proteins and for the assembly of the periplasmic c-type cytochromes. Acts by transferring electrons from cytoplasmic thioredoxin to the periplasm. This transfer involves a cascade of disulfide bond formation and reduction steps. This Haemophilus influenzae (strain PittEE) protein is Thiol:disulfide interchange protein DsbD.